A 925-amino-acid chain; its full sequence is MAEANPRRGKMRFRRNAASFPGNLHLVLVLRPTSFLQRTFTDIGFWFSQEDFMLKLPVVMLSSVSDLLTYIDDKQLTPELGGTLQYCHSEWIIFRNAIENFALTVKEMAQMLQSFGTELAETELPDDIPSIEEILAIRAERYHLLKNDITAVTKEGKILLTNLEVPDTEGAVSSRLECHRQISGDWQTINKLLTQVHDMETAFDGFWEKHQLKMEQYLQLWKFEQDFQQLVTEVEFLLNQQAELADVTGTIAQVKQKIKKLENLDENSQELLSKAQFVILHGHKLAANHHYALDLICQRCNELRYLSDILVNEIKAKRIQLSRTFKMHKLLQQARQCCDEGECLLANQEIDKFQSKEDAQKALQDIENFLEMALPFINYEPETLQYEFDVILSPELKVQMKTIQLKLENIRSIFENQQAGFRNLADKHVRPIQFVVPTPENLVTSGTPFFSSKQGKKTWRQNQSNLKIEVVPDCQEKRSSGPSSSLDNGNSLDVLKNHVLNELIQTERVYVRELYTVLLGYRAEMDNPEMFDLMPPLLRNKKDILFGNMAEIYEFHNDIFLSSLENCAHAPERVGPCFLERKDDFQMYAKYCQNKPRSETIWRKYSECAFFQECQRKLKHRLRLDSYLLKPVQRITKYQLLLKELLKYSKDCEGSALLKKALDAMLDLLKSVNDSMHQIAINGYIGNLNELGKMIMQGGFSVWIGHKKGATKMKDLARFKPMQRHLFLYEKAIVFCKRRVESGEGSDRYPSYSFKHCWKMDEVGITEYVKGDNRKFEIWYGEKEEVYIVQASNVDVKMTWLKEIRNILLKQQELLTVKKRKQQDQLTERDKFQISLQQNDEKQQGAFISTEETELEHTSTVVEVCEAIASVQAEANTVWTEASQSAEISEEPAEWSSNYFYPTYDENEEENRPLMRPVSEMALLY.

Residues 1 to 88 (MAEANPRRGK…ELGGTLQYCH (88 aa)) enclose the CRAL-TRIO domain. The Spectrin repeat unit spans residues 221-322 (WKFEQDFQQL…EIKAKRIQLS (102 aa)). Positions 495–675 (LKNHVLNELI…LDLLKSVNDS (181 aa)) constitute a DH domain. Residues 687–809 (NLNELGKMIM…WLKEIRNILL (123 aa)) form the PH domain.

This sequence belongs to the MCF2 family. As to quaternary structure, interacts with an array of inositol phospholipids such as phosphatidylinositol 3-phosphate (PI3P), phosphatidylinositol 4-phosphate (PI4P) and phosphatidylinositol 5-phosphate (PI5P). May interact with CCPG1. In terms of processing, phosphorylation by TNK2 enhances guanine nucleotide exchange factor (GEF) activity toward Rho family proteins. Isoform 1 is expressed only in brain. Isoform 3 is expressed in heart, kidney, spleen, liver and testis. Isoform 4 is expressed in brain, heart, kidney, testis, placenta, stomach and peripheral blood. The protein is detectable in brain, heart, kidney, intestine, muscle, lung and testis.

The protein localises to the cytoplasm. The protein resides in the membrane. Guanine nucleotide exchange factor (GEF) that modulates the Rho family of GTPases. Promotes the conversion of some member of the Rho family GTPase from the GDP-bound to the GTP-bound form. Isoform 1 exhibits no activity toward RHOA, RAC1 or CDC42. Isoform 2 exhibits decreased GEF activity toward CDC42. Isoform 3 exhibits a weak but significant activity toward RAC1 and CDC42. Isoform 4 exhibits significant activity toward RHOA and CDC42. The truncated DBL oncogene is active toward RHOA, RAC1 and CDC42. The protein is Proto-oncogene DBL (MCF2) of Homo sapiens (Human).